The chain runs to 587 residues: Kelch-like protein 3 (587 aa).

The disordered stretch occupies residues 1 to 22; that stretch reads MDGESIKPSSQPLIQTGDDEKN. At S10 the chain carries Phosphoserine. In terms of domain architecture, BTB spans 50-117; the sequence is CDVMIVAEDV…IYTAEIEVTE (68 aa). In terms of domain architecture, BACK spans 152-254; that stretch reads CLGIRAFADV…PRDYLVQTVE (103 aa). Phosphothreonine is present on T295. Kelch repeat units follow at residues 302 to 347, 348 to 394, 396 to 441, 442 to 490, 491 to 537, and 539 to 585; these read VMIV…FMAG, HVYA…VLND, LYAV…VVEG, KLYA…VLSG, QLYA…AVNG, and LYVV…VIHK. Phosphothreonine is present on T375. S376 and S433 each carry phosphoserine.

It belongs to the KLHL3 family. Homodimer. Component of the BCR(KLHL3) E3 ubiquitin ligase complex, at least composed of CUL3 and KLHL3 and RBX1. Interacts with CLDN8. In terms of processing, phosphorylation at Ser-433 by PKA or PKC decreases the interaction with WNK1 and WNK4, leading to inhibit their degradation by the BCR(KLHL3) complex. Phosphorylated at Ser-433 by PKC in response to angiotensin II signaling, decreasing ability to promote degradation of WNK1 and WNK4, leading to activation of Na-Cl cotransporter SLC12A3/NCC. Phosphorylation at Ser-433 is increased by insulin. Dephosphorylated at Ser-433 by calcineurin PPP3CA, promoting degradation of WNK1 and WNK4.

The protein localises to the cytoplasm. It is found in the cytoskeleton. Its subcellular location is the cytosol. The protein operates within protein modification; protein ubiquitination. In terms of biological role, substrate-specific adapter of a BCR (BTB-CUL3-RBX1) E3 ubiquitin ligase complex that acts as a regulator of ion transport in the distal nephron. The BCR(KLHL3) complex acts by mediating ubiquitination and degradation of WNK1 and WNK4, two activators of Na-Cl cotransporter SLC12A3/NCC in distal convoluted tubule cells of kidney, thereby regulating NaCl reabsorption. The BCR(KLHL3) complex also mediates ubiquitination and degradation of WNK3. The BCR(KLHL3) complex also mediates ubiquitination of CLDN8, a tight-junction protein required for paracellular chloride transport in the kidney, leading to its degradation. This Bos taurus (Bovine) protein is Kelch-like protein 3 (KLHL3).